The primary structure comprises 363 residues: NAD(P)H-quinone oxidoreductase subunit 1, chloroplastic (363 aa).

Transmembrane regions (helical) follow at residues F30–L50, I104–L124, I129–G149, Y248–S268, V300–I320, and F343–L363.

The protein belongs to the complex I subunit 1 family. NDH is composed of at least 16 different subunits, 5 of which are encoded in the nucleus.

It localises to the plastid. The protein resides in the chloroplast thylakoid membrane. The catalysed reaction is a plastoquinone + NADH + (n+1) H(+)(in) = a plastoquinol + NAD(+) + n H(+)(out). The enzyme catalyses a plastoquinone + NADPH + (n+1) H(+)(in) = a plastoquinol + NADP(+) + n H(+)(out). In terms of biological role, NDH shuttles electrons from NAD(P)H:plastoquinone, via FMN and iron-sulfur (Fe-S) centers, to quinones in the photosynthetic chain and possibly in a chloroplast respiratory chain. The immediate electron acceptor for the enzyme in this species is believed to be plastoquinone. Couples the redox reaction to proton translocation, and thus conserves the redox energy in a proton gradient. The polypeptide is NAD(P)H-quinone oxidoreductase subunit 1, chloroplastic (Eucalyptus globulus subsp. globulus (Tasmanian blue gum)).